Consider the following 117-residue polypeptide: Large ribosomal subunit protein bL19 (117 aa).

The protein belongs to the bacterial ribosomal protein bL19 family.

Functionally, this protein is located at the 30S-50S ribosomal subunit interface and may play a role in the structure and function of the aminoacyl-tRNA binding site. The sequence is that of Large ribosomal subunit protein bL19 from Phocaeicola vulgatus (strain ATCC 8482 / DSM 1447 / JCM 5826 / CCUG 4940 / NBRC 14291 / NCTC 11154) (Bacteroides vulgatus).